The primary structure comprises 562 residues: Phosphoglucomutase-1 (562 aa).

At M1 the chain carries N-acetylmethionine. An N6-acetyllysine modification is found at K16. An alpha-D-glucose 1,6-bisphosphate-binding site is contributed by R23. Position 115 is a phosphothreonine (T115). S117 is an alpha-D-glucose 1,6-bisphosphate binding site. Residue S117 is the Phosphoserine intermediate of the active site. Residue S117 participates in Mg(2+) binding. S117 and S134 each carry phosphoserine. Phosphothreonine is present on T185. At S213 the chain carries Phosphoserine. Mg(2+) contacts are provided by D288, D290, and D292. Alpha-D-glucose 1,6-bisphosphate contacts are provided by D292 and R293. K349 carries the post-translational modification N6-acetyllysine. Y353 bears the Phosphotyrosine mark. Alpha-D-glucose 1,6-bisphosphate is bound at residue T357. S369 carries the phosphoserine modification. Alpha-D-glucose 1,6-bisphosphate-binding residues include E376, S378, and K389. S378 is subject to Phosphoserine. K419 is subject to N6-succinyllysine. T467 is subject to Phosphothreonine; by PAK1. A phosphoserine mark is found at S477, S485, and S505. T507 is subject to Phosphothreonine. Residues S509 and S541 each carry the phosphoserine modification.

This sequence belongs to the phosphohexose mutase family. As to quaternary structure, monomer. Requires Mg(2+) as cofactor. In terms of processing, phosphorylation at Thr-467 by PAK1 significantly enhances enzymatic activity.

It is found in the cytoplasm. It carries out the reaction alpha-D-glucose 1-phosphate = alpha-D-glucose 6-phosphate. The catalysed reaction is O-phospho-L-seryl-[protein] + alpha-D-glucose 1-phosphate = alpha-D-glucose 1,6-bisphosphate + L-seryl-[protein]. The enzyme catalyses alpha-D-glucose 1,6-bisphosphate + L-seryl-[protein] = O-phospho-L-seryl-[protein] + alpha-D-glucose 6-phosphate. Functionally, catalyzes the reversible isomerization of alpha-D-glucose 1-phosphate to alpha-D-glucose 6-phosphate. The mechanism proceeds via the intermediate compound alpha-D-glucose 1,6-bisphosphate. This enzyme participates in both the breakdown and synthesis of glucose. The polypeptide is Phosphoglucomutase-1 (PGM1) (Bos taurus (Bovine)).